Consider the following 556-residue polypeptide: Urocanate hydratase (556 aa).

Residues 53–54, Q131, 177–179, E197, 243–244, 264–268, 274–275, and Y323 contribute to the NAD(+) site; these read GG, GMG, NA, QTSAH, and YL. The active site involves C411. G493 contributes to the NAD(+) binding site.

This sequence belongs to the urocanase family. Requires NAD(+) as cofactor.

The protein resides in the cytoplasm. The catalysed reaction is 4-imidazolone-5-propanoate = trans-urocanate + H2O. It functions in the pathway amino-acid degradation; L-histidine degradation into L-glutamate; N-formimidoyl-L-glutamate from L-histidine: step 2/3. In terms of biological role, catalyzes the conversion of urocanate to 4-imidazolone-5-propionate. The protein is Urocanate hydratase of Pseudomonas fluorescens (strain SBW25).